We begin with the raw amino-acid sequence, 47 residues long: Photosystem II reaction center protein K (47 aa).

A propeptide spanning residues methionine 1–alanine 10 is cleaved from the precursor. The chain crosses the membrane as a helical span at residues alanine 20–tryptophan 40.

Belongs to the PsbK family. As to quaternary structure, PSII is composed of 1 copy each of membrane proteins PsbA, PsbB, PsbC, PsbD, PsbE, PsbF, PsbH, PsbI, PsbJ, PsbK, PsbL, PsbM, PsbT, PsbX, PsbY, Psb30/Ycf12, peripheral proteins PsbO, CyanoQ (PsbQ), PsbU, PsbV and a large number of cofactors. It forms dimeric complexes.

It localises to the cellular thylakoid membrane. In terms of biological role, one of the components of the core complex of photosystem II (PSII). PSII is a light-driven water:plastoquinone oxidoreductase that uses light energy to abstract electrons from H(2)O, generating O(2) and a proton gradient subsequently used for ATP formation. It consists of a core antenna complex that captures photons, and an electron transfer chain that converts photonic excitation into a charge separation. This chain is Photosystem II reaction center protein K, found in Prochlorococcus marinus (strain MIT 9303).